The sequence spans 203 residues: Galactoside O-acetyltransferase (203 aa).

The substrate site is built by Asp-17, Ser-71, Asn-85, and Asp-93. Asn-85 contributes to the acetyl-CoA binding site. His-115 (proton donor/acceptor) is an active-site residue. Residues Ser-142, Ala-160, 165 to 166 (TK), Arg-180, and Arg-183 contribute to the acetyl-CoA site.

This sequence belongs to the transferase hexapeptide repeat family. Homotrimer. In terms of processing, the N-terminus of this protein is heterogeneous because the initiator methionine is only partially cleaved.

Its subcellular location is the cytoplasm. The enzyme catalyses a beta-D-galactoside + acetyl-CoA = a 6-acetyl-beta-D-galactoside + CoA. In terms of biological role, catalyzes the CoA-dependent transfer of an acetyl group to the 6-O-methyl position of a range of galactosides, glucosides, and lactosides. May assist cellular detoxification by acetylating non-metabolizable pyranosides, thereby preventing their reentry into the cell. The chain is Galactoside O-acetyltransferase (lacA) from Escherichia coli (strain K12).